The primary structure comprises 206 residues: Transmembrane emp24 domain-containing protein bai (206 aa).

The signal sequence occupies residues 1–20; it reads MARAALIVCLLMACAWSSHA. Topologically, residues 21–172 are lumenal; that stretch reads VMFKLSPNTQ…RDTNEKTNSR (152 aa). Residues 30–140 enclose the GOLD domain; the sequence is QKCLKEDIQA…LKPLEVDLKR (111 aa). A helical transmembrane segment spans residues 173–193; that stretch reads VLFFSIFSMCCLLGLATWQVL. Over 194–206 the chain is Cytoplasmic; it reads YLRRYFKAKKLIE.

It belongs to the EMP24/GP25L family.

It localises to the membrane. Functionally, eca and bai are essential, though not redundant, for dorsoventral patterning of the embryo. Specifically required during early embryogenesis for the activity of maternal tkv, while the zygotic tkv is not affected. The polypeptide is Transmembrane emp24 domain-containing protein bai (Drosophila erecta (Fruit fly)).